A 1579-amino-acid chain; its full sequence is MSRQFPHSSAPLRSVKEVQFGLLSPEEVRAISVAKIEYPETMDQATKRPREGGLNDPRLGSIDRNFKCQTCGEDMAECPGHFGHIELAKPVFHIGFIAKIKKVCECVCMHCGKLLLDESNPAMAQAIRIRDPKKRFNAVWNLCKGKMICEADVLQDDGEGNEPKRTSRGGCGHTQPVVRKDGLKLWGTWKQNKNYDETEQPERRLLTPSEILNVFKHINSEDCVRLGFNEDYARPEWMLITVLPVPPPPVRPSIAFNDTARGEDDLTFKLADVIKANINVQRLELDGSPQHVISEFEALLQFHVATYMDNDIAGQPQALQKTGRPIKSIRARLKGKEGRLRGNLMGKRVDFSARTVISGDPNLDLDQVGVPISIARTLTYPEIVTPYNIHRLTEYVRNGPNEHPGAKYVIRDTGDRIDLRYNKRAGDIALQYGWKVERHLMDDDPVLFNRQPSLHKMSMMCHRVKVMPYSTFRLNLSVTSPYNADFDGDEMNLHVPQSPETRAELSEICAVPLQIVSPQSNKPVMGIVQDTLCGVRKMTLRDIFIEYDQVMNMLYWIPDWDGVIPPMNLKDLNNVKQMVVSGSKGSFINISQMSACVGQQIVEGKRIPFGFADRSLPHFTKDDYSPESKGFVENSYLRGLTPQEFFFHAMAGREGLIDTAVKTAETGYIQRRLVKALEDIMVHYDGTTRNSLGDIIQFVYGEDGVDGTQVESQSVDVIPGTDESFERRYRVDLLDPEKCIRDSLLESGKEVRGDVNLQRVLDEEYEQLCNDRRYLREVCFTNGDYTWPLPVNLRRIIQNAQQLFHGGRHKASDLRLEEIVEGVKELCKKLLVLRGDSPLVKESQENATLLFQCLVRSRLATRRVIEEFRLNRMSFEWAMGEIETQFQKSLVHPGEMVGVIAAQSIGEPATQMTLNTFHYAGVSSKNVTLGVPRLKEILNVAKNIKTPALTVYLEKDIAADIEKAKVVQSAIEHTTLKNVTASTEIFYDPDPRSTVLEEDYDTVEAYFAIPDEKVEESIEKQSPWLLRLELDRAKMLDKQLTMAQVAEKISQNFGEDLFVIWSDDTADKLIIRCRVVRDPKSLDEDVDAEEDQILKRIEAHMLESISLRGIQGITRVFMMQHKLSLPDETGEFKQGQEWVLETDGVNLADVMAVPGVDAKRTYSNNFIEILSVLGIEATRSALFKEILNVIAFDGSYVNYRHMALLVDVMTARGHLMAITRHGINRADTGALMRCSFEETVEILLEAGAAAELDDCHGISENVVLGQLAPLGTGAFDVMVDDKILQSSPSNMSVPVGAAEGAGAYADDGGATPYREYDMEDDKIQFEEGAGFSPIHTAPVSDGAGALTAYGGQPGSPSPTSPFAYGATSPAYGGASPGYGVTSPTYSPTSPSYSPTSPSYSPTSPSYSPTSPSYSPTSPSYSPTSPSYSPTSPSYSPTSPSYSPTSPSYSPTSPSYSPTSPSYSPTSPSYSPTSPSYSPTSPSYSPTSPSYSPTSPSYSPTSPLYSPTSPSYSPTSPSYSPTSPSYSPTSPSYSPTSPQYSPTSPAYSPTSPQYSPNSPQYSPRSPLYSPDQNDDKDKKQ.

C68, C71, C78, H81, C108, C111, C149, and C171 together coordinate Zn(2+). Mg(2+) contacts are provided by D485, D487, and D489. The tract at residues 642-654 (PQEFFFHAMAGRE) is bridging helix. K1080 is covalently cross-linked (Glycyl lysine isopeptide (Lys-Gly) (interchain with G-Cter in ubiquitin)). The span at 1382-1565 (SPTYSPTSPS…NSPQYSPRSP (184 aa)) shows a compositional bias: low complexity. The disordered stretch occupies residues 1382-1579 (SPTYSPTSPS…DQNDDKDKKQ (198 aa)). Repeat copies occupy residues 1385 to 1391 (YSPTSPS), 1392 to 1398 (YSPTSPS), 1399 to 1405 (YSPTSPS), 1406 to 1412 (YSPTSPS), 1413 to 1419 (YSPTSPS), 1420 to 1426 (YSPTSPS), 1427 to 1433 (YSPTSPS), 1434 to 1440 (YSPTSPS), 1441 to 1447 (YSPTSPS), 1448 to 1454 (YSPTSPS), 1455 to 1461 (YSPTSPS), 1462 to 1468 (YSPTSPS), 1469 to 1475 (YSPTSPS), 1476 to 1482 (YSPTSPS), 1483 to 1489 (YSPTSPS), and 1490 to 1496 (YSPTSPS). The C-terminal domain (CTD); 26 X 7 AA approximate tandem repeats of Y-S-P-T-S-P-[S-A-Q] stretch occupies residues 1385–1566 (YSPTSPSYSP…SPQYSPRSPL (182 aa)). A 17; approximate repeat occupies 1497–1503 (YSPTSPL). A run of 7 repeats spans residues 1504–1510 (YSPTSPS), 1511–1517 (YSPTSPS), 1518–1524 (YSPTSPS), 1525–1531 (YSPTSPS), 1532–1538 (YSPTSPQ), 1539–1545 (YSPTSPA), and 1546–1552 (YSPTSPQ). One copy of the 25; approximate repeat lies at 1553 to 1559 (YSPNSPQ). The 26; approximate repeat unit spans residues 1560–1566 (YSPRSPL).

It belongs to the RNA polymerase beta' chain family. Component of the RNA polymerase II (Pol II) complex consisting of 12 subunits. In terms of processing, the tandem 7 residues repeats in the C-terminal domain (CTD) can be highly phosphorylated. The phosphorylation activates Pol II. Phosphorylation occurs mainly at residues 'Ser-2' and 'Ser-5' of the heptapeptide repeat. The phosphorylation state is believed to result from the balanced action of site-specific CTD kinases and phosphatase, and a 'CTD code' that specifies the position of Pol II within the transcription cycle has been proposed. Following transcription stress, the elongating form of RNA polymerase II (RNA pol IIo) is polyubiquitinated via 'Lys-63'-linkages on Lys-1080 at DNA damage sites without leading to degradation: ubiquitination promotes RNA pol IIo backtracking to allow access by the transcription-coupled nucleotide excision repair (TC-NER) machinery. Subsequent DEF1-dependent polyubiquitination by the elongin complex via 'Lys-48'-linkages may lead to proteasome-mediated degradation; presumably at stalled RNA pol II where TC-NER has failed, to halt global transcription and enable 'last resort' DNA repair pathways.

The protein localises to the nucleus. The catalysed reaction is RNA(n) + a ribonucleoside 5'-triphosphate = RNA(n+1) + diphosphate. DNA-dependent RNA polymerase catalyzes the transcription of DNA into RNA using the four ribonucleoside triphosphates as substrates. Largest and catalytic component of RNA polymerase II which synthesizes mRNA precursors and many functional non-coding RNAs. Forms the polymerase active center together with the second largest subunit. Pol II is the central component of the basal RNA polymerase II transcription machinery. It is composed of mobile elements that move relative to each other. RPB1 is part of the core element with the central large cleft, the clamp element that moves to open and close the cleft and the jaws that are thought to grab the incoming DNA template. At the start of transcription, a single-stranded DNA template strand of the promoter is positioned within the central active site cleft of Pol II. A bridging helix emanates from RPB1 and crosses the cleft near the catalytic site and is thought to promote translocation of Pol II by acting as a ratchet that moves the RNA-DNA hybrid through the active site by switching from straight to bent conformations at each step of nucleotide addition. During transcription elongation, Pol II moves on the template as the transcript elongates. Elongation is influenced by the phosphorylation status of the C-terminal domain (CTD) of Pol II largest subunit (RPB1), which serves as a platform for assembly of factors that regulate transcription initiation, elongation, termination and mRNA processing. The chain is DNA-directed RNA polymerase II subunit RPB1 (RPB1) from Meyerozyma guilliermondii (strain ATCC 6260 / CBS 566 / DSM 6381 / JCM 1539 / NBRC 10279 / NRRL Y-324) (Yeast).